The primary structure comprises 560 residues: Nuclear hormone receptor family member nhr-8 (560 aa).

Positions 1 to 21 are disordered; the sequence is MPSSSPSMDESRRSAVPPKEP. Residues 23–98 constitute a DNA-binding region (nuclear receptor); the sequence is GRICTVCSDR…VGMNSEWLND (76 aa). NR C4-type zinc fingers lie at residues 26 to 46 and 62 to 86; these read CTVCSDRANGYNFGVLTCESC and CPFSDSCQITSASRKFCQACRLNKC. The 225-residue stretch at 336–560 folds into the NR LBD domain; that stretch reads DEITLLEELH…PLIRELCSFE (225 aa).

This sequence belongs to the nuclear hormone receptor family.

It localises to the nucleus. In terms of biological role, orphan nuclear receptor. This Caenorhabditis elegans protein is Nuclear hormone receptor family member nhr-8 (nhr-8).